The following is a 521-amino-acid chain: Protein disulfide-isomerase A5 (521 aa).

Residues 1 to 25 (MARVVPAWLLLPLAVWVVLPTWLSS) form the signal peptide. Thioredoxin domains lie at 136 to 263 (FLKD…NPQP), 274 to 386 (ADEG…NPES), and 387 to 508 (PPPP…TLRE). Cystine bridges form between Cys184–Cys187, Cys307–Cys310, and Cys428–Cys431. Positions 518 to 521 (KEEL) match the Prevents secretion from ER motif.

It belongs to the protein disulfide isomerase family.

The protein localises to the endoplasmic reticulum lumen. The catalysed reaction is Catalyzes the rearrangement of -S-S- bonds in proteins.. The polypeptide is Protein disulfide-isomerase A5 (PDIA5) (Bos taurus (Bovine)).